The primary structure comprises 326 residues: Organic solute transporter subunit alpha (326 aa).

Topologically, residues 1–28 (METSNFTLFDPRCRAEAPFAIDAIKQLD) are extracellular. The N-linked (GlcNAc...) asparagine glycan is linked to asparagine 5. The chain crosses the membrane as a helical span at residues 29–49 (IFGKVLYTVLTLMATASMLVF). Residues 50 to 67 (IEECIYIYKKVPAHKKST) are Cytoplasmic-facing. A helical transmembrane segment spans residues 68–88 (IIWVTGVAPVMAIMSCLGMWV). Residues 89–99 (PRATMFTDMTS) lie on the Extracellular side of the membrane. Residues 100 to 120 (ATYFAIVVFKFLILMIEEVGG) traverse the membrane as a helical segment. Topologically, residues 121–161 (DNAFLRRCEKQTFKISTGPCCCCCPCLPNVPITRRSLFILK) are cytoplasmic. Residues 162-182 (LGSYQFALMKLVLTIFSIVLW) form a helical membrane-spanning segment. Topologically, residues 183–198 (TNGSFSLTNVSASGAA) are extracellular. N-linked (GlcNAc...) asparagine glycans are attached at residues asparagine 184 and asparagine 191. A helical membrane pass occupies residues 199–219 (IWINSFIGVLTIIALWPVAIM). Over 220 to 237 (FMHVREALRTLKIVPKYA) the chain is Cytoplasmic. A helical transmembrane segment spans residues 238-258 (MYQLVLILSQLQTAIINILAL). N-linked (GlcNAc...) asparagine glycosylation is present at asparagine 259. The Extracellular segment spans residues 259 to 275 (NGTIACSPPYSSQARGY). A helical transmembrane segment spans residues 276-296 (MMSQQLLIVEMFIITLVTRVL). Over 297–326 (YRRQYEPIPEPDDVEEKKTVLSSKKAIDVA) the chain is Cytoplasmic.

The protein belongs to the OST-alpha family. As to quaternary structure, interacts with slc51b. The Ost-alpha/Ost-beta complex is a heterodimer composed of alpha (slc51a) and beta (slc51b) subunit.

Its subcellular location is the cell membrane. The protein localises to the endoplasmic reticulum membrane. It carries out the reaction taurocholate(out) = taurocholate(in). The catalysed reaction is prostaglandin E2(out) = prostaglandin E2(in). It catalyses the reaction estrone 3-sulfate(out) = estrone 3-sulfate(in). The enzyme catalyses dehydroepiandrosterone 3-sulfate(out) = dehydroepiandrosterone 3-sulfate(in). It carries out the reaction tauroursodeoxycholate(out) = tauroursodeoxycholate(in). The catalysed reaction is glycoursodeoxycholate(out) = glycoursodeoxycholate(in). It catalyses the reaction glycocholate(out) = glycocholate(in). The enzyme catalyses taurochenodeoxycholate(out) = taurochenodeoxycholate(in). It carries out the reaction glycochenodeoxycholate(out) = glycochenodeoxycholate(in). The catalysed reaction is taurodeoxycholate(out) = taurodeoxycholate(in). It catalyses the reaction glycodeoxycholate(out) = glycodeoxycholate(in). In terms of biological role, essential component of the Ost-alpha/Ost-beta complex, a heterodimer that acts as the intestinal basolateral transporter responsible for the translocation of bile acids (such as taurocholate), steroids (such as estrone sulfate), and eicosanoids (such as prostaglandin E2). The polypeptide is Organic solute transporter subunit alpha (slc51a) (Danio rerio (Zebrafish)).